Here is an 88-residue protein sequence, read N- to C-terminus: Small ribosomal subunit protein uS15 (88 aa).

The protein belongs to the universal ribosomal protein uS15 family. As to quaternary structure, part of the 30S ribosomal subunit. Forms a bridge to the 50S subunit in the 70S ribosome, contacting the 23S rRNA.

Functionally, one of the primary rRNA binding proteins, it binds directly to 16S rRNA where it helps nucleate assembly of the platform of the 30S subunit by binding and bridging several RNA helices of the 16S rRNA. In terms of biological role, forms an intersubunit bridge (bridge B4) with the 23S rRNA of the 50S subunit in the ribosome. This chain is Small ribosomal subunit protein uS15, found in Mesoplasma florum (strain ATCC 33453 / NBRC 100688 / NCTC 11704 / L1) (Acholeplasma florum).